Consider the following 505-residue polypeptide: Cytochrome c oxidase subunit 1 (505 aa).

Residues 14 to 34 (LLYLVFAFFGGLLGTSLSMLI) form a helical membrane-spanning segment. The Ca(2+) site is built by E37 and G42. The next 6 helical transmembrane spans lie at 55 to 75 (VIIT…ALFG), 98 to 118 (NISF…TLVE), 143 to 163 (AILS…NMLV), 180 to 200 (LFVW…PVLA), 229 to 249 (LFWF…FGIV), and 261 to 281 (VFGL…GFIV). H60 is a Fe(II)-heme a binding site. Cu cation is bound by residues H235 and Y239. A cross-link (1'-histidyl-3'-tyrosine (His-Tyr)) is located at residues 235–239 (HPEVY). Y239 contributes to the O2 binding site. Cu cation-binding residues include H284 and H285. 2 consecutive transmembrane segments (helical) span residues 302 to 322 (ATMI…ATIY) and 332 to 352 (MWFA…GVVL). The Mg(2+) site is built by H362 and D363. Heme a3 is bound at residue H370. H372 contributes to the Fe(II)-heme a binding site. 3 helical membrane passes run 374–394 (VLSM…GNLI), 408–428 (FWLL…LGLA), and 446–466 (AVSS…ATTF).

This sequence belongs to the heme-copper respiratory oxidase family. As to quaternary structure, component of the cytochrome c oxidase (complex IV, CIV), a multisubunit enzyme composed of a catalytic core of 3 subunits and several supernumerary subunits. The complex exists as a monomer or a dimer and forms supercomplexes (SCs) in the inner mitochondrial membrane with ubiquinol-cytochrome c oxidoreductase (cytochrome b-c1 complex, complex III, CIII). The cofactor is heme. Cu cation serves as cofactor.

It localises to the mitochondrion inner membrane. It carries out the reaction 4 Fe(II)-[cytochrome c] + O2 + 8 H(+)(in) = 4 Fe(III)-[cytochrome c] + 2 H2O + 4 H(+)(out). The protein operates within energy metabolism; oxidative phosphorylation. In terms of biological role, component of the cytochrome c oxidase, the last enzyme in the mitochondrial electron transport chain which drives oxidative phosphorylation. The respiratory chain contains 3 multisubunit complexes succinate dehydrogenase (complex II, CII), ubiquinol-cytochrome c oxidoreductase (cytochrome b-c1 complex, complex III, CIII) and cytochrome c oxidase (complex IV, CIV), that cooperate to transfer electrons derived from NADH and succinate to molecular oxygen, creating an electrochemical gradient over the inner membrane that drives transmembrane transport and the ATP synthase. Cytochrome c oxidase is the component of the respiratory chain that catalyzes the reduction of oxygen to water. Electrons originating from reduced cytochrome c in the intermembrane space (IMS) are transferred via the dinuclear copper A center (CU(A)) of subunit 2 and heme A of subunit 1 to the active site in subunit 1, a binuclear center (BNC) formed by heme A3 and copper B (CU(B)). The BNC reduces molecular oxygen to 2 water molecules using 4 electrons from cytochrome c in the IMS and 4 protons from the mitochondrial matrix. This Chlamydomonas reinhardtii (Chlamydomonas smithii) protein is Cytochrome c oxidase subunit 1 (COX1).